Reading from the N-terminus, the 375-residue chain is Neuropeptide Y receptor type 4-2 (375 aa).

The Extracellular segment spans residues 1–39; the sequence is MNTSHLLALLLPKSPQGENRSKPLGTPYNFSEHCQDSVD. N-linked (GlcNAc...) asparagine glycans are attached at residues N2, N19, and N29. Residues 40 to 60 traverse the membrane as a helical segment; it reads VMVFIVTSYSIETVVGVLGNL. The Cytoplasmic portion of the chain corresponds to 61–87; it reads CLMCVTVRQKEKANVTNLLIANLAFSD. A helical transmembrane segment spans residues 88–108; the sequence is FLMCLLCQPLTAVYTIMDYWI. Over 109-116 the chain is Extracellular; sequence FGETLCKM. C114 and C201 are disulfide-bonded. Residues 117–137 form a helical membrane-spanning segment; it reads SAFIQCMSVTVSILSLVLVAL. The Cytoplasmic segment spans residues 138–155; the sequence is ERHQLIINPTGWKPSISQ. The helical transmembrane segment at 156 to 176 threads the bilayer; the sequence is AYLGIVLIWVIACVLSLPFLA. Topologically, residues 177 to 212 are extracellular; it reads NSILENVFHKNHSKALEFLADKVVCTESWPLAHHRT. Residue N187 is glycosylated (N-linked (GlcNAc...) asparagine). A helical membrane pass occupies residues 213 to 233; sequence IYTTFLLLFQYCLPLGFILVC. Topologically, residues 234 to 263 are cytoplasmic; sequence YARIYRRLQRQGRVFHKGTYSLRAGHMKQV. The chain crosses the membrane as a helical span at residues 264–284; that stretch reads NVVLVVMVVAFAVLWLPLHVF. Topologically, residues 285 to 301 are extracellular; the sequence is NSLEDWHHEAIPICHGN. The helical transmembrane segment at 302–322 threads the bilayer; that stretch reads LIFLVCHLLAMASTCVNPFIY. Residues 323–375 are Cytoplasmic-facing; it reads GFLNTNFKKEIKALVLTCQQSAPLEESEHLPLSTVHTEVSKGSLRLSGRSNPI. Residue C340 is the site of S-palmitoyl cysteine attachment.

The protein belongs to the G-protein coupled receptor 1 family.

The protein resides in the cell membrane. Functionally, g protein-coupled receptor for PPY/pancreatic polypeptide/PP, NPY/neuropeptide Y and PYY/peptide YY that is negatively coupled to cAMP. The rank order of affinity for these polypeptides and their derivatives is PP, PP (2-36) and [Ile-31, Gln-34] PP &gt; [Pro-34] PYY &gt; PYY and [Leu-31, Pro-34] NPY &gt; NPY &gt; PYY (3-36) and NPY (2-36) &gt; PP (13-36) &gt; PP (31-36) &gt; NPY free acid. This is Neuropeptide Y receptor type 4-2 from Homo sapiens (Human).